The primary structure comprises 218 residues: NAD(P)H-quinone oxidoreductase subunit I (218 aa).

2 4Fe-4S ferredoxin-type domains span residues 55 to 84 (GRIH…VDWV) and 95 to 124 (RNYS…MTEE). 8 residues coordinate [4Fe-4S] cluster: Cys-64, Cys-67, Cys-70, Cys-74, Cys-104, Cys-107, Cys-110, and Cys-114. Residues 168 to 218 (EVQPHGVDPSRPRAGQRPDQVLSSLKQNAGGSAGNEGESATSTNTSKGSAE) are disordered. Over residues 208–218 (TSTNTSKGSAE) the composition is skewed to polar residues.

Belongs to the complex I 23 kDa subunit family. In terms of assembly, NDH-1 is composed of at least 11 different subunits. Requires [4Fe-4S] cluster as cofactor.

The protein resides in the cellular thylakoid membrane. The catalysed reaction is a plastoquinone + NADH + (n+1) H(+)(in) = a plastoquinol + NAD(+) + n H(+)(out). It catalyses the reaction a plastoquinone + NADPH + (n+1) H(+)(in) = a plastoquinol + NADP(+) + n H(+)(out). Its function is as follows. NDH-1 shuttles electrons from an unknown electron donor, via FMN and iron-sulfur (Fe-S) centers, to quinones in the respiratory and/or the photosynthetic chain. The immediate electron acceptor for the enzyme in this species is believed to be plastoquinone. Couples the redox reaction to proton translocation, and thus conserves the redox energy in a proton gradient. The polypeptide is NAD(P)H-quinone oxidoreductase subunit I (Synechococcus sp. (strain WH7803)).